Here is a 306-residue protein sequence, read N- to C-terminus: Putative HTH-type transcriptional regulatory protein Mhun_2548 (306 aa).

Residues 132 to 189 (LRELRETRSLSLGDLGQILGVSRRTVAKYEAGMGTTIEIALRIEETFDSGVIEPIDLI) form the HTH cro/C1-type domain. Residues 143 to 162 (LGDLGQILGVSRRTVAKYEA) constitute a DNA-binding region (H-T-H motif).

The polypeptide is Putative HTH-type transcriptional regulatory protein Mhun_2548 (Methanospirillum hungatei JF-1 (strain ATCC 27890 / DSM 864 / NBRC 100397 / JF-1)).